Reading from the N-terminus, the 381-residue chain is Testis-specific expressed protein 55 (381 aa).

Disordered regions lie at residues 1–176 (MDEP…SDPH) and 292–317 (TTEYTSDTTPVFDQGRSSQRSSQSSR). Composition is skewed to basic and acidic residues over residues 8 to 24 (SLNHENTTRAPDNEKNN) and 65 to 103 (RTSEEAEQRSSQPTEHRLPGHAERRASQQAERRLSERRT). A compositionally biased stretch (polar residues) spans 104 to 113 (SQPPNQQLPS). The span at 114–125 (HSERKTSGKIDG) shows a compositional bias: basic and acidic residues. Positions 134–143 (TDQETSEFDD) are enriched in acidic residues. Polar residues-rich tracts occupy residues 147–163 (SASTDYLSARSQQQEYN) and 292–302 (TTEYTSDTTPV). Over residues 307–317 (RSSQRSSQSSR) the composition is skewed to low complexity.

As to expression, testis-specific.

It is found in the nucleus. The chain is Testis-specific expressed protein 55 from Mus musculus (Mouse).